Here is a 727-residue protein sequence, read N- to C-terminus: Tubulin polyglutamylase TTLL11 (727 aa).

The segment covering 1–12 (MRRSSPEKKPEA) has biased composition (basic and acidic residues). The interval 1 to 88 (MRRSSPEKKP…ARVVRRLPPA (88 aa)) is disordered. Over residues 17 to 34 (DAAAAAAATAAATESLPA) the composition is skewed to low complexity. Composition is skewed to basic and acidic residues over residues 49–63 (DPER…KDVG) and 72–81 (HAPEEGEARV). The region spanning 125 to 477 (PVTVDSSKAR…EVKVAVIRDT (353 aa)) is the TTL domain. Residues lysine 246, 252-253 (QG), 279-282 (QEYI), and 292-294 (KFD) each bind ATP. Glutamine 252 contacts a protein. Arginine 318 is a binding site for L-glutamate. ATP is bound at residue 340-341 (TN). L-glutamate contacts are provided by tyrosine 342, serine 343, and lysine 362. Residues aspartate 425, glutamate 438, and asparagine 440 each contribute to the Mg(2+) site. A c-MTBD region region spans residues 464-566 (LVDEEVKVAV…SICLKQVFPK (103 aa)). Lysine 470 lines the L-glutamate pocket. Disordered regions lie at residues 530 to 551 (KSFT…EPNP) and 694 to 727 (RPLQ…LSQS).

The protein belongs to the tubulin--tyrosine ligase family. The cofactor is Mg(2+). Highly expressed in brain, kidney, liver, lung, muscle and testis. Expressed in heart, spleen and trachea. In the brain, expressed in ependymal cilia, cortex, corpus callosum and striatum.

It localises to the cytoplasm. The protein resides in the cytoskeleton. Its subcellular location is the cilium basal body. It catalyses the reaction L-glutamyl-[protein] + L-glutamate + ATP = gamma-L-glutamyl-L-glutamyl-[protein] + ADP + phosphate + H(+). The catalysed reaction is (L-glutamyl)(n)-gamma-L-glutamyl-L-glutamyl-[protein] + L-glutamate + ATP = (L-glutamyl)(n+1)-gamma-L-glutamyl-L-glutamyl-[protein] + ADP + phosphate + H(+). Polyglutamylase which modifies tubulin, generating polyglutamate side chains of variable lengths on the gamma-carboxyl group of specific glutamate residues within the C-terminal tail of tubulin. Preferentially mediates ATP-dependent polyglutamate long side-chain elongation over the initiation step of the polyglutamylation reaction. Preferentially modifies the alpha-tubulin tail over a beta-tail. Required for CCSAP localization to both spindle and cilia microtubules. Promotes tubulin polyglutamylation which stimulates spastin/SPAST-mediated microtubule severing, thereby regulating microtubule functions. The chain is Tubulin polyglutamylase TTLL11 from Mus musculus (Mouse).